Reading from the N-terminus, the 613-residue chain is Transcription factor MTB1 (613 aa).

The tract at residues 48–130 is JAZ-interaction domain; the sequence is LQNKLSDLVE…RVLQKLHMLF (83 aa). Disordered regions lie at residues 256 to 285 and 391 to 441; these read EKNE…FGHD and AHNV…AERQ. Over residues 260–270 the composition is skewed to polar residues; the sequence is GNNPRLSNSGA. Basic and acidic residues-rich tracts occupy residues 394–417 and 427–441; these read VESE…DEKR and NGRE…AERQ. The interval 430–443 is basic motif; degenerate; that stretch reads EEPLNHVEAERQRR. One can recognise a bHLH domain in the interval 430 to 479; the sequence is EEPLNHVEAERQRREKLNQRFYALRAVVPNISKMDKASLLGDAIAYITEL. Positions 444-479 are helix-loop-helix motif; that stretch reads EKLNQRFYALRAVVPNISKMDKASLLGDAIAYITEL. A disordered region spans residues 490 to 513; that stretch reads RELRLGSTSRDAITSEDSPSSEIQ. Over residues 495–512 the composition is skewed to polar residues; sequence GSTSRDAITSEDSPSSEI.

In terms of assembly, interacts with MYC2 (via N-terminus). MTB1 competes with MED25 for binding to MYC2. Interacts (via N-terminus) with JAZ7.

The protein resides in the nucleus. In terms of biological role, transcription factor that negatively regulates jasmonate (JA) signaling. Negatively regulates JA-dependent response to wounding, JA-induced expression of defense genes, JA-dependent responses against herbivorous insects, and JA-dependent resistance against Botrytis cinerea infection. Plays a positive role in resistance against the bacterial pathogen Pseudomonas syringae pv tomato DC3000. This chain is Transcription factor MTB1, found in Solanum lycopersicum (Tomato).